Reading from the N-terminus, the 150-residue chain is Late promoter-activating protein (150 aa).

In terms of biological role, trans-activating factor involved in the late regulation of the P1 lytic growth cycle. May be the transcriptional activator of all late P1 functions. The sequence is that of Late promoter-activating protein (lpa) from Escherichia phage P1 (Bacteriophage P1).